The following is a 191-amino-acid chain: Ribosome maturation factor RimM (191 aa).

The 74-residue stretch at 99 to 172 (TDEFYQIDLI…FLVVDPVAAG (74 aa)) folds into the PRC barrel domain.

This sequence belongs to the RimM family. Binds ribosomal protein uS19.

Its subcellular location is the cytoplasm. In terms of biological role, an accessory protein needed during the final step in the assembly of 30S ribosomal subunit, possibly for assembly of the head region. Essential for efficient processing of 16S rRNA. May be needed both before and after RbfA during the maturation of 16S rRNA. It has affinity for free ribosomal 30S subunits but not for 70S ribosomes. This is Ribosome maturation factor RimM from Bartonella bacilliformis (strain ATCC 35685 / KC583 / Herrer 020/F12,63).